Consider the following 332-residue polypeptide: Putative D-threonate 4-phosphate dehydrogenase (332 aa).

His-138 and Thr-139 together coordinate substrate. His-168, His-211, and His-266 together coordinate a divalent metal cation. Residues Lys-274 and Arg-292 each coordinate substrate.

Belongs to the PdxA family. PdxA2 subfamily. In terms of assembly, homodimer. Requires a divalent metal cation as cofactor.

It catalyses the reaction 4-O-phospho-D-threonate + NAD(+) = dihydroxyacetone phosphate + CO2 + NADH. In terms of biological role, catalyzes the NAD-dependent oxidation and subsequent decarboxylation of D-threonate 4-phosphate to produce dihydroxyacetone phosphate (DHAP). This is Putative D-threonate 4-phosphate dehydrogenase from Fusobacterium nucleatum subsp. nucleatum (strain ATCC 25586 / DSM 15643 / BCRC 10681 / CIP 101130 / JCM 8532 / KCTC 2640 / LMG 13131 / VPI 4355).